We begin with the raw amino-acid sequence, 286 residues long: Bifunctional protein FolD (286 aa).

NADP(+) contacts are provided by residues 165–167, serine 190, and valine 231; that span reads GRS.

It belongs to the tetrahydrofolate dehydrogenase/cyclohydrolase family. In terms of assembly, homodimer.

The catalysed reaction is (6R)-5,10-methylene-5,6,7,8-tetrahydrofolate + NADP(+) = (6R)-5,10-methenyltetrahydrofolate + NADPH. It carries out the reaction (6R)-5,10-methenyltetrahydrofolate + H2O = (6R)-10-formyltetrahydrofolate + H(+). Its pathway is one-carbon metabolism; tetrahydrofolate interconversion. In terms of biological role, catalyzes the oxidation of 5,10-methylenetetrahydrofolate to 5,10-methenyltetrahydrofolate and then the hydrolysis of 5,10-methenyltetrahydrofolate to 10-formyltetrahydrofolate. The chain is Bifunctional protein FolD from Bacillus cereus (strain AH187).